A 339-amino-acid chain; its full sequence is Ferrochelatase (339 aa).

Fe cation-binding residues include histidine 202 and glutamate 283.

This sequence belongs to the ferrochelatase family.

It is found in the cytoplasm. It carries out the reaction heme b + 2 H(+) = protoporphyrin IX + Fe(2+). Its pathway is porphyrin-containing compound metabolism; protoheme biosynthesis; protoheme from protoporphyrin-IX: step 1/1. Its function is as follows. Catalyzes the ferrous insertion into protoporphyrin IX. The polypeptide is Ferrochelatase (Psychrobacter cryohalolentis (strain ATCC BAA-1226 / DSM 17306 / VKM B-2378 / K5)).